The chain runs to 134 residues: Methylglyoxal synthase (134 aa).

The MGS-like domain maps to 1 to 134; sequence MHIALIAHDE…DWRDLRRNDE (134 aa). Residues histidine 8, lysine 12, 34–37, and 54–55 each bind substrate; these read TGTT and SG. Residue aspartate 60 is the Proton donor/acceptor of the active site. Histidine 87 lines the substrate pocket.

Belongs to the methylglyoxal synthase family.

The enzyme catalyses dihydroxyacetone phosphate = methylglyoxal + phosphate. In terms of biological role, catalyzes the formation of methylglyoxal from dihydroxyacetone phosphate. The chain is Methylglyoxal synthase from Listeria welshimeri serovar 6b (strain ATCC 35897 / DSM 20650 / CCUG 15529 / CIP 8149 / NCTC 11857 / SLCC 5334 / V8).